The chain runs to 436 residues: MTNGNNNNLEFAELKIRGKMFKLPILKASIGKDVIDISRVSAEADCFTYDPGFMSTASCQSTITYIDGDKGILWHRGYDIKDLAEKSDFLEVAYLMIYGELPSSEQYHNFTTKIAHHALVNERLHYLFQTFCSSSHPMAIMLAAVGSLSAFYPDLLNFNETDYELTAIRMIAKIPTIAAMSYKYSIGQPFIYPDNSLDFTENFLHMMFATPCTKYKVNPIIKNALNKIFILHADHEQNASTSTVRIAGSSGANPFACISTGIASLWGPAHGGANEAVINMLKEIGSSENIPKYVAKAKDKNDPFRLMGFGHRVYKSYDPRAAVLKETCKEVLNELGQLENNPLLQIAIELEALALKDEYFIERKLYPNVDFYSGIIYKAMGIPSQMFTVLFAIARTVGWMAQWKEMHEDPEQKISRPRQLYTGYVHREYKCIVERK.

Catalysis depends on residues His311 and Asp370.

The protein belongs to the citrate synthase family.

It catalyses the reaction oxaloacetate + acetyl-CoA + H2O = citrate + CoA + H(+). The protein operates within carbohydrate metabolism; tricarboxylic acid cycle; isocitrate from oxaloacetate: step 1/2. This Rickettsia typhi (strain ATCC VR-144 / Wilmington) protein is Citrate synthase (gltA).